The primary structure comprises 921 residues: Protein translocase subunit SecA (921 aa).

Residues glutamine 87, 105 to 109 (GEGKT), and aspartate 516 each bind ATP. The Zn(2+) site is built by cysteine 905, cysteine 907, cysteine 916, and histidine 917.

This sequence belongs to the SecA family. As to quaternary structure, monomer and homodimer. Part of the essential Sec protein translocation apparatus which comprises SecA, SecYEG and auxiliary proteins SecDF-YajC and YidC. Zn(2+) is required as a cofactor.

Its subcellular location is the cell inner membrane. It localises to the cytoplasm. It catalyses the reaction ATP + H2O + cellular proteinSide 1 = ADP + phosphate + cellular proteinSide 2.. Functionally, part of the Sec protein translocase complex. Interacts with the SecYEG preprotein conducting channel. Has a central role in coupling the hydrolysis of ATP to the transfer of proteins into and across the cell membrane, serving both as a receptor for the preprotein-SecB complex and as an ATP-driven molecular motor driving the stepwise translocation of polypeptide chains across the membrane. This chain is Protein translocase subunit SecA, found in Polaromonas sp. (strain JS666 / ATCC BAA-500).